Reading from the N-terminus, the 145-residue chain is uncharacterized protein (145 aa).

Transmembrane regions (helical) follow at residues 1 to 21 (MELF…YFLI), 28 to 48 (TVLI…MGAL), 54 to 74 (SMTS…AYVM), and 96 to 116 (FFLI…IPSA).

Belongs to the DcuC/DcuD transporter (TC 2.A.61) family.

It localises to the cell membrane. This is an uncharacterized protein from Haemophilus influenzae (strain ATCC 51907 / DSM 11121 / KW20 / Rd).